The sequence spans 208 residues: Thioesterase 1/protease 1/lysophospholipase L1 (208 aa).

The N-terminal stretch at 1–26 is a signal peptide; sequence MMNFNNVFRWHLPFLFLVLLTFRAAA. Ser-36 acts as the Nucleophile in catalysis. Substrate contacts are provided by Gly-70 and Asn-99. Active-site residues include Asp-180 and His-183.

This sequence belongs to the 'GDSL' lipolytic enzyme family. Monomer or homotetramer.

Its subcellular location is the periplasm. It carries out the reaction a fatty acyl-CoA + H2O = a fatty acid + CoA + H(+). The catalysed reaction is hexadecanoyl-CoA + H2O = hexadecanoate + CoA + H(+). The enzyme catalyses (9Z)-hexadecenoyl-CoA + H2O = (9Z)-hexadecenoate + CoA + H(+). It catalyses the reaction octadecanoyl-CoA + H2O = octadecanoate + CoA + H(+). It carries out the reaction (9Z)-octadecenoyl-CoA + H2O = (9Z)-octadecenoate + CoA + H(+). The catalysed reaction is (9Z)-octadecenoyl-[ACP] + H2O = (9Z)-octadecenoate + holo-[ACP] + H(+). The enzyme catalyses (11Z)-octadecenoyl-CoA + H2O = (11Z)-octadecenoate + CoA + H(+). It catalyses the reaction tetradecanoyl-CoA + H2O = tetradecanoate + CoA + H(+). It carries out the reaction (5Z,8Z,11Z,14Z)-eicosatetraenoyl-CoA + H2O = (5Z,8Z,11Z,14Z)-eicosatetraenoate + CoA + H(+). The catalysed reaction is dodecanoyl-CoA + H2O = dodecanoate + CoA + H(+). The enzyme catalyses decanoyl-CoA + H2O = decanoate + CoA + H(+). It catalyses the reaction hexanoyl-CoA + H2O = hexanoate + CoA + H(+). It carries out the reaction a 1-acyl-sn-glycero-3-phosphocholine + H2O = sn-glycerol 3-phosphocholine + a fatty acid + H(+). The catalysed reaction is a phenyl acetate + H2O = a phenol + acetate + H(+). The enzyme catalyses a butanoate ester + H2O = an aliphatic alcohol + butanoate + H(+). It catalyses the reaction a hexanoate ester + H2O = an aliphatic alcohol + hexanoate + H(+). It carries out the reaction an octanoate ester + H2O = an aliphatic alcohol + octanoate + H(+). TesA is a multifunctional esterase that can act as a thioesterase, arylesterase, lysophospholipase and protease. The polypeptide is Thioesterase 1/protease 1/lysophospholipase L1 (tesA) (Escherichia coli O6:H1 (strain CFT073 / ATCC 700928 / UPEC)).